Reading from the N-terminus, the 179-residue chain is Large ribosomal subunit protein uL5 (179 aa).

It belongs to the universal ribosomal protein uL5 family. In terms of assembly, part of the 50S ribosomal subunit; part of the 5S rRNA/L5/L18/L25 subcomplex. Contacts the 5S rRNA and the P site tRNA. Forms a bridge to the 30S subunit in the 70S ribosome.

In terms of biological role, this is one of the proteins that bind and probably mediate the attachment of the 5S RNA into the large ribosomal subunit, where it forms part of the central protuberance. In the 70S ribosome it contacts protein S13 of the 30S subunit (bridge B1b), connecting the 2 subunits; this bridge is implicated in subunit movement. Contacts the P site tRNA; the 5S rRNA and some of its associated proteins might help stabilize positioning of ribosome-bound tRNAs. This chain is Large ribosomal subunit protein uL5, found in Burkholderia ambifaria (strain MC40-6).